The chain runs to 335 residues: Nucleoid-associated protein PP_0973 (335 aa).

The protein belongs to the YejK family.

Its subcellular location is the cytoplasm. The protein resides in the nucleoid. The chain is Nucleoid-associated protein PP_0973 from Pseudomonas putida (strain ATCC 47054 / DSM 6125 / CFBP 8728 / NCIMB 11950 / KT2440).